The chain runs to 403 residues: Flavohemoprotein (403 aa).

The Globin domain occupies 1-138 (MLTQKTKDIV…LADILAGMES (138 aa)). Heme b is bound at residue His85. Active-site charge relay system residues include Tyr95 and Glu137. The tract at residues 149 to 403 (GGWAGWRRFI…EVFGPDLFAE (255 aa)) is reductase. The FAD-binding FR-type domain occupies 152–262 (AGWRRFIVRE…AAPYGNFYID (111 aa)). Residues Tyr190 and 206–209 (RQYS) each bind FAD. NADP(+) is bound at residue 275-280 (GVGLTP). Residue 395 to 398 (VFGP) participates in FAD binding.

It belongs to the globin family. Two-domain flavohemoproteins subfamily. This sequence in the C-terminal section; belongs to the flavoprotein pyridine nucleotide cytochrome reductase family. Requires heme b as cofactor. FAD is required as a cofactor.

It carries out the reaction 2 nitric oxide + NADPH + 2 O2 = 2 nitrate + NADP(+) + H(+). It catalyses the reaction 2 nitric oxide + NADH + 2 O2 = 2 nitrate + NAD(+) + H(+). Is involved in NO detoxification in an aerobic process, termed nitric oxide dioxygenase (NOD) reaction that utilizes O(2) and NAD(P)H to convert NO to nitrate, which protects the bacterium from various noxious nitrogen compounds. Therefore, plays a central role in the inducible response to nitrosative stress. The sequence is that of Flavohemoprotein from Rhizobium meliloti (strain 1021) (Ensifer meliloti).